The primary structure comprises 150 residues: MTDRTQPHAVQVHTTAGRFGDTAAGTNRYADRGPSTSKVIAVITGLPIGGTLLLFAGLALAGTLLGLAVTTPLFILFSPVIVPATIVVGLSVAGFLTSGACGLTGLSSFSWVMNYIRQTHGSVPEQLEMAKHRMADVAGYVGQKTKDVGQ.

The next 2 membrane-spanning stretches (helical) occupy residues 39–59 and 73–93; these read VIAVITGLPIGGTLLLFAGLA and LFILFSPVIVPATIVVGLSVA.

This sequence belongs to the oleosin family. As to expression, expressed in seeds (at protein level).

The protein resides in the lipid droplet. The protein localises to the membrane. Its function is as follows. May have a structural role to stabilize the lipid body during desiccation of the seed by preventing coalescence of the oil. Probably interacts with both lipid and phospholipid moieties of lipid bodies. May also provide recognition signals for specific lipase anchorage in lipolysis during seedling growth. The protein is Oleosin Ara h 10.0102 of Arachis hypogaea (Peanut).